The following is a 373-amino-acid chain: Queuine tRNA-ribosyltransferase (373 aa).

The active-site Proton acceptor is the D94. Substrate is bound by residues 94–98 (DSGGF), D148, Q190, and G217. An RNA binding region spans residues 248-254 (GVGSPDC). Catalysis depends on D267, which acts as the Nucleophile. Residues 272 to 276 (TRIAR) are RNA binding; important for wobble base 34 recognition. C305, C307, C310, and H336 together coordinate Zn(2+).

Belongs to the queuine tRNA-ribosyltransferase family. As to quaternary structure, homodimer. Within each dimer, one monomer is responsible for RNA recognition and catalysis, while the other monomer binds to the replacement base PreQ1. Requires Zn(2+) as cofactor.

The catalysed reaction is 7-aminomethyl-7-carbaguanine + guanosine(34) in tRNA = 7-aminomethyl-7-carbaguanosine(34) in tRNA + guanine. It participates in tRNA modification; tRNA-queuosine biosynthesis. In terms of biological role, catalyzes the base-exchange of a guanine (G) residue with the queuine precursor 7-aminomethyl-7-deazaguanine (PreQ1) at position 34 (anticodon wobble position) in tRNAs with GU(N) anticodons (tRNA-Asp, -Asn, -His and -Tyr). Catalysis occurs through a double-displacement mechanism. The nucleophile active site attacks the C1' of nucleotide 34 to detach the guanine base from the RNA, forming a covalent enzyme-RNA intermediate. The proton acceptor active site deprotonates the incoming PreQ1, allowing a nucleophilic attack on the C1' of the ribose to form the product. After dissociation, two additional enzymatic reactions on the tRNA convert PreQ1 to queuine (Q), resulting in the hypermodified nucleoside queuosine (7-(((4,5-cis-dihydroxy-2-cyclopenten-1-yl)amino)methyl)-7-deazaguanosine). This chain is Queuine tRNA-ribosyltransferase, found in Moorella thermoacetica (strain ATCC 39073 / JCM 9320).